The chain runs to 777 residues: ATPase ARSA1 (777 aa).

Residue Lys-110–Ser-117 participates in ATP binding. Asp-139 is an active-site residue. Residues Asn-372 and Lys-454–Ser-461 contribute to the ATP site. Asp-483 is an active-site residue. Position 712 (Asn-712) interacts with ATP.

This sequence belongs to the arsA ATPase family. As to quaternary structure, monomer. Interacts with TOC34.

The protein localises to the cytoplasm. It localises to the cytosol. In terms of biological role, ATPase required for the post-translational delivery of tail-anchored (TA) proteins to the chloroplast. Required for the accumulation of TOC34, an essential component of the outer chloroplast membrane translocon (TOC) complex. Recognizes and selectively binds the transmembrane domain of TA proteins in the cytosol. This complex then targets to chloroplast, where the tail-anchored protein is released for insertion. This process is regulated by ATP binding and hydrolysis. This Chlamydomonas reinhardtii (Chlamydomonas smithii) protein is ATPase ARSA1.